Consider the following 259-residue polypeptide: L-ornithine N(alpha)-acyltransferase (259 aa).

This sequence belongs to the acetyltransferase family. OlsB subfamily.

It carries out the reaction a (3R)-hydroxyacyl-[ACP] + L-ornithine = a lyso-ornithine lipid + holo-[ACP] + H(+). The protein operates within lipid metabolism. Catalyzes the first step in the biosynthesis of ornithine lipids, which are phosphorus-free membrane lipids. Catalyzes the 3-hydroxyacyl-acyl carrier protein-dependent acylation of ornithine to form lyso-ornithine lipid (LOL). This is L-ornithine N(alpha)-acyltransferase from Rhodobacter capsulatus (strain ATCC BAA-309 / NBRC 16581 / SB1003).